A 553-amino-acid chain; its full sequence is Hyaluronan synthase 3 (553 aa).

At 1 to 15 (MPVQLTTALRVVGTS) the chain is on the cytoplasmic side. Residues 16-36 (LFALAVLGGILAAYVTGYQFI) form a helical membrane-spanning segment. Residues 37 to 44 (HTEKHYLS) lie on the Extracellular side of the membrane. A helical membrane pass occupies residues 45 to 65 (FGLYGAILGLHLLIQSLFAFL). Residues 66 to 377 (EHRRMRRAGQ…NSLWFHKHHL (312 aa)) are Cytoplasmic-facing. Residues 378 to 398 (WMTYESVVTGFFPFFLIATVI) form a helical membrane-spanning segment. Topologically, residues 399 to 408 (QLFYRGRIWN) are extracellular. A helical membrane pass occupies residues 409-429 (ILLFLLTVQLVGIIKATYACF). The Cytoplasmic portion of the chain corresponds to 430–440 (LRGNAEMIFMS). The helical transmembrane segment at 441–461 (LYSLLYMSSLLPAKIFAIATI) threads the bilayer. N-linked (GlcNAc...) asparagine glycosylation occurs at Asn-462. The Extracellular segment spans residues 462–473 (NKSGWGTSGRKT). A helical membrane pass occupies residues 474–494 (IVVNFIGLIPVSIWVAVLLGG). Topologically, residues 495–515 (LAYTAYCQDLFSETELAFLVS) are cytoplasmic. The chain crosses the membrane as a helical span at residues 516–536 (GAILYGCYWVALLMLYLAIIA). The Extracellular segment spans residues 537–553 (RRCGKKPEQYSLAFAEV).

It belongs to the NodC/HAS family. Homodimers. Forms heterodimers with HAS2 and HAS1. Mg(2+) serves as cofactor. Post-translationally, O-GlcNAcylation increases the hyaluronan synthase activity, HAS3 stability and its plasma membrane residence. The concentration of UDP-GlcNAc controls the level of O-GlcNAc modification.

The protein resides in the cell membrane. The protein localises to the golgi apparatus membrane. It is found in the golgi apparatus. It localises to the trans-Golgi network membrane. Its subcellular location is the early endosome. It catalyses the reaction [hyaluronan](n) + UDP-N-acetyl-alpha-D-glucosamine = N-acetyl-beta-D-glucosaminyl-(1-&gt;4)-[hyaluronan](n) + UDP + H(+). The catalysed reaction is N-acetyl-beta-D-glucosaminyl-(1-&gt;4)-[hyaluronan](n) + UDP-alpha-D-glucuronate = [hyaluronan](n+1) + UDP + H(+). The protein operates within glycan biosynthesis; hyaluronan biosynthesis. With respect to regulation, the enzymatic activity depends on the availability of cytosolic levels of UDP-GlcUA and UDP-GlcNAc. Its function is as follows. Catalyzes the addition of GlcNAc or GlcUA monosaccharides to the nascent hyaluronan polymer. Therefore, it is essential to hyaluronan synthesis a major component of most extracellular matrices that has a structural role in tissues architectures and regulates cell adhesion, migration and differentiation. This is one of three isoenzymes responsible for cellular hyaluronan synthesis. The sequence is that of Hyaluronan synthase 3 from Homo sapiens (Human).